Consider the following 170-residue polypeptide: MIIERLVGNLRDLNPLDFNVDYVDLEWFETRKKIARFKTRQGKDIAIRLKDAPKLGLSQGDILFKEEKEIIAVNILDSEVIHIQAKSVAEVAKICYEIGNRHAALYYGESQFEFKTPFEKPTLALLEKLGVQNRVLSSKLDSKERLTVSMPHSEPNFKVSLASDFKVVMK.

This sequence belongs to the UreE family.

It localises to the cytoplasm. Functionally, involved in urease metallocenter assembly. Binds nickel. Probably functions as a nickel donor during metallocenter assembly. The protein is Urease accessory protein UreE of Helicobacter pylori (strain P12).